Here is an 84-residue protein sequence, read N- to C-terminus: MAGERAQNLQDTFLNHVRKNKIPLTIFLVNGVKLQGVVTWFDNFCVLLRRDGHSQLVYKHAISTIMPGHPVQLFEPDETAPEKA.

The region spanning 11 to 71 is the Sm domain; sequence DTFLNHVRKN…ISTIMPGHPV (61 aa).

It belongs to the Hfq family. Homohexamer.

In terms of biological role, RNA chaperone that binds small regulatory RNA (sRNAs) and mRNAs to facilitate mRNA translational regulation in response to envelope stress, environmental stress and changes in metabolite concentrations. Also binds with high specificity to tRNAs. This is RNA-binding protein Hfq from Methylorubrum populi (strain ATCC BAA-705 / NCIMB 13946 / BJ001) (Methylobacterium populi).